The chain runs to 213 residues: Nicolin-1 (213 aa).

Part of the neuronal tubulin polyglutamylase complex which contains TPGS1, TPGS2, TTLL1, LRRC49 and NICN1.

It is found in the nucleus. The chain is Nicolin-1 (NICN1) from Canis lupus familiaris (Dog).